Consider the following 188-residue polypeptide: Transcription antitermination protein NusB (188 aa).

The interval 154 to 188 (RAANPGAVSGSDAPVAPWDDSEELPAEDEAEDSRP) is disordered. Residues 172–188 (DDSEELPAEDEAEDSRP) show a composition bias toward acidic residues.

The protein belongs to the NusB family.

Its function is as follows. Involved in transcription antitermination. Required for transcription of ribosomal RNA (rRNA) genes. Binds specifically to the boxA antiterminator sequence of the ribosomal RNA (rrn) operons. This chain is Transcription antitermination protein NusB, found in Corynebacterium efficiens (strain DSM 44549 / YS-314 / AJ 12310 / JCM 11189 / NBRC 100395).